We begin with the raw amino-acid sequence, 228 residues long: 7-cyano-7-deazaguanine synthase (228 aa).

ATP is bound at residue 16–26 (FSGGQDSTTCL). Zn(2+) is bound by residues Cys193, Cys201, Cys204, and Cys207.

This sequence belongs to the QueC family. Requires Zn(2+) as cofactor.

It catalyses the reaction 7-carboxy-7-deazaguanine + NH4(+) + ATP = 7-cyano-7-deazaguanine + ADP + phosphate + H2O + H(+). Its pathway is purine metabolism; 7-cyano-7-deazaguanine biosynthesis. Catalyzes the ATP-dependent conversion of 7-carboxy-7-deazaguanine (CDG) to 7-cyano-7-deazaguanine (preQ(0)). The chain is 7-cyano-7-deazaguanine synthase from Pasteurella multocida (strain Pm70).